A 794-amino-acid chain; its full sequence is Mitochondrial intermediate peptidase (794 aa).

The N-terminal 39 residues, 1–39 (MRVTSSRLLQGGSLVSRVLKRRLNNASRTKKGWFSTRTL), are a transit peptide targeting the mitochondrion. Histidine 581 is a Zn(2+) binding site. Glutamate 582 is an active-site residue. Histidine 585 and histidine 588 together coordinate Zn(2+).

The protein belongs to the peptidase M3 family. Zn(2+) serves as cofactor.

The protein resides in the mitochondrion matrix. The enzyme catalyses Release of an N-terminal octapeptide as second stage of processing of some proteins imported into the mitochondrion.. In terms of biological role, cleaves proteins, imported into the mitochondrion, to their mature size. While most mitochondrial precursor proteins are processed to the mature form in one step by mitochondrial processing peptidase (MPP), the sequential cleavage by MIP of an octapeptide after initial processing by MPP is a required step for a subgroup of nuclear-encoded precursor proteins destined for the matrix or the inner membrane. The sequence is that of Mitochondrial intermediate peptidase (OCT1) from Debaryomyces hansenii (strain ATCC 36239 / CBS 767 / BCRC 21394 / JCM 1990 / NBRC 0083 / IGC 2968) (Yeast).